Reading from the N-terminus, the 434-residue chain is Hydrogenobyrinate a,c-diamide synthase (434 aa).

Residues 243-434 enclose the GATase cobBQ-type domain; it reads RIAVARDIAF…MHLIDVAGAA (192 aa). Cysteine 326 (nucleophile) is an active-site residue.

The protein belongs to the CobB/CbiA family. Homodimer. Requires Mg(2+) as cofactor.

It carries out the reaction hydrogenobyrinate + 2 L-glutamine + 2 ATP + 2 H2O = hydrogenobyrinate a,c-diamide + 2 L-glutamate + 2 ADP + 2 phosphate + 2 H(+). Its pathway is cofactor biosynthesis; adenosylcobalamin biosynthesis; cob(II)yrinate a,c-diamide from precorrin-2 (aerobic route): step 9/10. Its function is as follows. Catalyzes the ATP-dependent amidation of the two carboxylate groups at positions a and c of hydrogenobyrinate, using either L-glutamine or ammonia as the nitrogen source. To a much lesser extent, can also use cobyrinate as substrate in vitro, but the physiological substrate is indeed hydrogenobyrinate, as part of the aerobic pathway for cobalamin biosynthesis. This Sinorhizobium sp protein is Hydrogenobyrinate a,c-diamide synthase.